Consider the following 222-residue polypeptide: Probable translocation protein y4yL (222 aa).

Helical transmembrane passes span 6-26 (PAIL…LAVV), 52-72 (PNIV…APVA), 158-178 (IGFL…TILM), and 182-202 (MSMV…FVAI).

It belongs to the FliP/MopC/SpaP family.

It localises to the cell membrane. In terms of biological role, could be involved in the secretion of an unknown factor. The polypeptide is Probable translocation protein y4yL (Sinorhizobium fredii (strain NBRC 101917 / NGR234)).